We begin with the raw amino-acid sequence, 182 residues long: Dynactin subunit 5 (182 aa).

Met1 carries the N-acetylmethionine modification.

It belongs to the dynactin subunits 5/6 family. Dynactin subunit 5 subfamily. In terms of assembly, subunit of dynactin, a multiprotein complex part of a tripartite complex with dynein and a adapter, such as BICDL1, BICD2 or HOOK3. The dynactin complex is built around ACTR1A/ACTB filament and consists of an actin-related filament composed of a shoulder domain, a pointed end and a barbed end. Its length is defined by its flexible shoulder domain. The soulder is composed of 2 DCTN1 subunits, 4 DCTN2 and 2 DCTN3. The 4 DCNT2 (via N-terminus) bind the ACTR1A filament and act as molecular rulers to determine the length. The pointed end is important for binding dynein-dynactin cargo adapters. Consists of 4 subunits: ACTR10, DCNT4, DCTN5 and DCTN6. Within the complex DCTN6 forms a heterodimer with DCTN5. The barbed end is composed of a CAPZA1:CAPZB heterodimers, which binds ACTR1A/ACTB filament and dynactin and stabilizes dynactin. Interacts with N4BP2L1.

The protein localises to the cytoplasm. Its subcellular location is the cytoskeleton. The protein resides in the chromosome. It localises to the centromere. It is found in the kinetochore. Its function is as follows. Part of the dynactin complex that activates the molecular motor dynein for ultra-processive transport along microtubules. This Pongo abelii (Sumatran orangutan) protein is Dynactin subunit 5 (DCTN5).